Here is a 1342-residue protein sequence, read N- to C-terminus: DNA-directed RNA polymerase subunit beta (1342 aa).

This sequence belongs to the RNA polymerase beta chain family. The RNAP catalytic core consists of 2 alpha, 1 beta, 1 beta' and 1 omega subunit. When a sigma factor is associated with the core the holoenzyme is formed, which can initiate transcription.

The catalysed reaction is RNA(n) + a ribonucleoside 5'-triphosphate = RNA(n+1) + diphosphate. Its function is as follows. DNA-dependent RNA polymerase catalyzes the transcription of DNA into RNA using the four ribonucleoside triphosphates as substrates. In Klebsiella pneumoniae (strain 342), this protein is DNA-directed RNA polymerase subunit beta.